We begin with the raw amino-acid sequence, 223 residues long: ATP phosphoribosyltransferase (223 aa).

This sequence belongs to the ATP phosphoribosyltransferase family. Short subfamily. Heteromultimer composed of HisG and HisZ subunits.

The protein resides in the cytoplasm. It carries out the reaction 1-(5-phospho-beta-D-ribosyl)-ATP + diphosphate = 5-phospho-alpha-D-ribose 1-diphosphate + ATP. It participates in amino-acid biosynthesis; L-histidine biosynthesis; L-histidine from 5-phospho-alpha-D-ribose 1-diphosphate: step 1/9. Functionally, catalyzes the condensation of ATP and 5-phosphoribose 1-diphosphate to form N'-(5'-phosphoribosyl)-ATP (PR-ATP). Has a crucial role in the pathway because the rate of histidine biosynthesis seems to be controlled primarily by regulation of HisG enzymatic activity. The protein is ATP phosphoribosyltransferase of Desulfitobacterium hafniense (strain Y51).